The primary structure comprises 71 residues: Protein SlyX homolog (71 aa).

It belongs to the SlyX family.

In Azotobacter vinelandii (strain DJ / ATCC BAA-1303), this protein is Protein SlyX homolog.